Reading from the N-terminus, the 351-residue chain is Phosphoribosylformylglycinamidine cyclo-ligase (351 aa).

This sequence belongs to the AIR synthase family.

It localises to the cytoplasm. The catalysed reaction is 2-formamido-N(1)-(5-O-phospho-beta-D-ribosyl)acetamidine + ATP = 5-amino-1-(5-phospho-beta-D-ribosyl)imidazole + ADP + phosphate + H(+). The protein operates within purine metabolism; IMP biosynthesis via de novo pathway; 5-amino-1-(5-phospho-D-ribosyl)imidazole from N(2)-formyl-N(1)-(5-phospho-D-ribosyl)glycinamide: step 2/2. In Lysinibacillus sphaericus (strain C3-41), this protein is Phosphoribosylformylglycinamidine cyclo-ligase.